The following is a 365-amino-acid chain: MQQSDLQEQQLYRSLFLLKTPLIDLRAPVEFAQGAFPESCNLPLMTDNEREQVGTCYKKEGQAAAITLGHQLVASDIQNRIRKWAQFKEENPTAWLYCFRGGLRSRLSAQFLKDHGVDINIVPGGYKALRRYLINVIDQASEKKLMIVGGNTGCGKTLLIQALDNGLDIEGRANHRGSSFGKQVTEQPRQISYENQLAVDILHISQHASSLVIEDESKAVGALYVPERLFAGMTRAPMVVVNDPLEIRLQRLCYEYCTLMTEKFNLALGAEQGWQAYEKYLQNGLYGIRKRLGTEKFKVMNTVLEAALKQQKNTGSVEGHLNWIASILRDYYDPMYQYQLEKKADRVQFRGTFQEVKEWLTVNTK.

One can recognise a Rhodanese domain in the interval 16–138 (FLLKTPLIDL…LRRYLINVID (123 aa)). The active-site S-selanylcysteine intermediate is the Cys98.

The protein belongs to the SelU family. In terms of assembly, monomer.

The catalysed reaction is 5-methylaminomethyl-2-thiouridine(34) in tRNA + selenophosphate + (2E)-geranyl diphosphate + H2O + H(+) = 5-methylaminomethyl-2-selenouridine(34) in tRNA + (2E)-thiogeraniol + phosphate + diphosphate. It catalyses the reaction 5-methylaminomethyl-2-thiouridine(34) in tRNA + (2E)-geranyl diphosphate = 5-methylaminomethyl-S-(2E)-geranyl-thiouridine(34) in tRNA + diphosphate. It carries out the reaction 5-methylaminomethyl-S-(2E)-geranyl-thiouridine(34) in tRNA + selenophosphate + H(+) = 5-methylaminomethyl-2-(Se-phospho)selenouridine(34) in tRNA + (2E)-thiogeraniol. The enzyme catalyses 5-methylaminomethyl-2-(Se-phospho)selenouridine(34) in tRNA + H2O = 5-methylaminomethyl-2-selenouridine(34) in tRNA + phosphate. Functionally, involved in the post-transcriptional modification of the uridine at the wobble position (U34) of tRNA(Lys), tRNA(Glu) and tRNA(Gln). Catalyzes the conversion of 2-thiouridine (S2U-RNA) to 2-selenouridine (Se2U-RNA). Acts in a two-step process involving geranylation of 2-thiouridine (S2U) to S-geranyl-2-thiouridine (geS2U) and subsequent selenation of the latter derivative to 2-selenouridine (Se2U) in the tRNA chain. The sequence is that of tRNA 2-selenouridine synthase from Psychromonas ingrahamii (strain DSM 17664 / CCUG 51855 / 37).